The sequence spans 376 residues: Pyruvate dehydrogenase E1 component subunit beta-2, mitochondrial (376 aa).

A mitochondrion-targeting transit peptide spans 1–36 (MLGAARRQLGSGPMLGQVLRRLRPATAAAADAARAY). E99 is a thiamine diphosphate binding site. 4 residues coordinate K(+): I152, A200, I201, and D203.

In terms of assembly, tetramer of 2 alpha and 2 beta subunits. Thiamine diphosphate is required as a cofactor.

It is found in the mitochondrion matrix. It carries out the reaction N(6)-[(R)-lipoyl]-L-lysyl-[protein] + pyruvate + H(+) = N(6)-[(R)-S(8)-acetyldihydrolipoyl]-L-lysyl-[protein] + CO2. The pyruvate dehydrogenase complex catalyzes the overall conversion of pyruvate to acetyl-CoA and CO(2). It contains multiple copies of three enzymatic components: pyruvate dehydrogenase (E1), dihydrolipoamide acetyltransferase (E2) and lipoamide dehydrogenase (E3). The polypeptide is Pyruvate dehydrogenase E1 component subunit beta-2, mitochondrial (Oryza sativa subsp. japonica (Rice)).